Here is a 200-residue protein sequence, read N- to C-terminus: Recombination protein RecR (200 aa).

The C4-type zinc-finger motif lies at 57 to 72 (CRQCRTLTEDDLCPQC). The 96-residue stretch at 80–175 (TLLCVVEGPM…IASRIAHGVP (96 aa)) folds into the Toprim domain.

The protein belongs to the RecR family.

Functionally, may play a role in DNA repair. It seems to be involved in an RecBC-independent recombinational process of DNA repair. It may act with RecF and RecO. The polypeptide is Recombination protein RecR (Pseudomonas fluorescens (strain Pf0-1)).